A 66-amino-acid polypeptide reads, in one-letter code: Toxin BeM14 (66 aa).

Positions 2–66 (RDAYIADDRN…IRKIPGEECR (65 aa)) constitute an LCN-type CS-alpha/beta domain. 4 cysteine pairs are disulfide-bonded: Cys12–Cys65, Cys16–Cys36, Cys22–Cys46, and Cys26–Cys48.

The protein belongs to the long (4 C-C) scorpion toxin superfamily. Sodium channel inhibitor family. Alpha subfamily. Expressed by the venom gland.

It localises to the secreted. Functionally, alpha toxins bind voltage-independently at site-3 of sodium channels (Nav) and inhibit the inactivation of the activated channels, thereby blocking neuronal transmission. Has paralytic activity in mice. The sequence is that of Toxin BeM14 from Mesobuthus eupeus (Lesser Asian scorpion).